Reading from the N-terminus, the 124-residue chain is Cytoinsectotoxin-4 (124 aa).

The N-terminal stretch at 1–19 is a signal peptide; the sequence is MKCFILAAALVLAFACIAA. The propeptide occupies 20 to 62; it reads SEPAETENEDLDDLSDLEDEEWLDELEEAAEYLESLREFEESR. A Phenylalanine amide modification is found at F123.

This sequence belongs to the cationic peptide 06 (cytoinsectotoxin) family. Expressed by the venom gland.

It is found in the secreted. In terms of biological role, insecticidal and antimicrobial peptide. Has insecticidal activity against larvae of flesh fly S.carnaria. Has antibacterial activity against Gram-positive bacterium B.subtilis B-501 (MIC=2.5 uM) and Gram-negative bacterium E.coli DH5alpha (MIC=10 uM). The polypeptide is Cytoinsectotoxin-4 (Lachesana tarabaevi (Spider)).